The primary structure comprises 472 residues: Uronate isomerase (472 aa).

This sequence belongs to the metallo-dependent hydrolases superfamily. Uronate isomerase family.

It catalyses the reaction D-glucuronate = D-fructuronate. The catalysed reaction is aldehydo-D-galacturonate = keto-D-tagaturonate. It participates in carbohydrate metabolism; pentose and glucuronate interconversion. This Xanthomonas axonopodis pv. citri (strain 306) protein is Uronate isomerase.